The sequence spans 148 residues: MRYQKLEIQEANWQWKYLLKKHREGENITKHTEQSLIELKVQFLTTLQHSPAEIEQWIKAEMTAEQRKRMRQSIRAKRKRFFNAEKLTTKKKSIDLDYASWLRLSKYSKTHAMTLSETINHLIDERENQHLYSEQMAKMKASLKDLLK.

The protein belongs to the MatP family. Homodimer.

The protein resides in the cytoplasm. Functionally, required for spatial organization of the terminus region of the chromosome (Ter macrodomain) during the cell cycle. Prevents early segregation of duplicated Ter macrodomains during cell division. Binds specifically to matS, which is a 13 bp signature motif repeated within the Ter macrodomain. In Haemophilus ducreyi (strain 35000HP / ATCC 700724), this protein is Macrodomain Ter protein.